Reading from the N-terminus, the 388-residue chain is Chorismate synthase (388 aa).

NADP(+) contacts are provided by arginine 39 and arginine 45. FMN contacts are provided by residues 130-132 (RSS), 251-252 (NA), glycine 296, 311-315 (KPIPT), and arginine 337.

This sequence belongs to the chorismate synthase family. Homotetramer. FMNH2 is required as a cofactor.

It catalyses the reaction 5-O-(1-carboxyvinyl)-3-phosphoshikimate = chorismate + phosphate. It participates in metabolic intermediate biosynthesis; chorismate biosynthesis; chorismate from D-erythrose 4-phosphate and phosphoenolpyruvate: step 7/7. Functionally, catalyzes the anti-1,4-elimination of the C-3 phosphate and the C-6 proR hydrogen from 5-enolpyruvylshikimate-3-phosphate (EPSP) to yield chorismate, which is the branch point compound that serves as the starting substrate for the three terminal pathways of aromatic amino acid biosynthesis. This reaction introduces a second double bond into the aromatic ring system. The polypeptide is Chorismate synthase (Streptococcus pyogenes serotype M2 (strain MGAS10270)).